Reading from the N-terminus, the 732-residue chain is X-ray repair cross-complementing protein 5 (732 aa).

Residues 9 to 161 (AVVLCVDVGV…CNLKKSGISL (153 aa)) form the VWFA domain. The segment at 138–165 (LSSPFSQDQLDVIICNLKKSGISLQFFL) is leucine-zipper. K195 participates in a covalent cross-link: Glycyl lysine isopeptide (Lys-Gly) (interchain with G-Cter in SUMO2). A Ku domain is found at 253–453 (IGPNLSIKIV…CTPTEAQLSA (201 aa)). S258 carries the phosphoserine modification. K265 is modified (N6-acetyllysine). S318 is modified (phosphoserine). K332 carries the N6-acetyllysine modification. Residues K532 and K534 each participate in a glycyl lysine isopeptide (Lys-Gly) (interchain with G-Cter in SUMO2) cross-link. Phosphothreonine is present on T535. Glycyl lysine isopeptide (Lys-Gly) (interchain with G-Cter in SUMO2) cross-links involve residues K567 and K569. A phosphoserine; by PRKDC mark is found at S578, S580, and S581. K666 carries the N6-acetyllysine modification. Residues K670 and K689 each participate in a glycyl lysine isopeptide (Lys-Gly) (interchain with G-Cter in SUMO2) cross-link. The interval 708-732 (PKDKAKEDTTGPEEAGDVDDLLDMI) is disordered. Position 716 is a phosphothreonine; by PRKDC (T716). Positions 717–732 (TGPEEAGDVDDLLDMI) are enriched in acidic residues. The EEXXXDL motif motif lies at 720–728 (EEAGDVDDL).

Belongs to the ku80 family. In terms of assembly, heterodimer composed of XRCC5/Ku80 and XRCC6/Ku70. Component of the core long-range non-homologous end joining (NHEJ) complex (also named DNA-PK complex) composed of PRKDC, LIG4, XRCC4, XRCC6/Ku70, XRCC5/Ku86 and NHEJ1/XLF. Additional component of the NHEJ complex includes PAXX. Following autophosphorylation, PRKDC dissociates from DNA, leading to formation of the short-range NHEJ complex, composed of LIG4, XRCC4, XRCC6/Ku70, XRCC5/Ku86 and NHEJ1/XLF. The XRCC5-XRCC6 dimer also associates with NAA15, and this complex displays DNA binding activity towards the osteocalcin FGF response element (OCFRE). In addition, XRCC5 binds to the osteoblast-specific transcription factors MSX2 and RUNX2. Interacts with ELF3. Interacts with APLF (via KBM motif). The XRCC5/XRCC6 dimer associates in a DNA-dependent manner with APEX1. Identified in a complex with DEAF1 and XRCC6. Interacts with NR4A3; the DNA-dependent protein kinase complex DNA-PK phosphorylates and activates NR4A3 and prevents NR4A3 ubiquitinylation and degradation. Interacts with RNF138. Interacts with CYREN (via KBM motif). Interacts with WRN (via KBM motif). Interacts (via N-terminus) with HSF1 (via N-terminus); this interaction is direct and prevents XRCC5/XRCC6 heterodimeric binding and non-homologous end joining (NHEJ) repair activities induced by ionizing radiation (IR). Interacts with DHX9; this interaction occurs in a RNA-dependent manner. Part of the HDP-RNP complex composed of at least HEXIM1, PRKDC, XRCC5, XRCC6, paraspeckle proteins (SFPQ, NONO, PSPC1, RBM14, and MATR3) and NEAT1 RNA. Interacts with ERCC6. Interacts with ATF7. The XRCC5-XRCC6 dimer associates with ALKBH2. Interacts with TPRN; TPRN interacts with a number of DNA damage response proteins, is recruited to sites of DNA damage and may play a role in DNA damage repair. Interacts with ERCC6L2. In terms of processing, ADP-ribosylated by PARP3. Post-translationally, phosphorylated on serine residues. Phosphorylation by PRKDC may enhance helicase activity. Sumoylated. In terms of processing, ubiquitinated by RNF8 via 'Lys-48'-linked ubiquitination following DNA damage, leading to its degradation and removal from DNA damage sites. Ubiquitinated by RNF138, leading to remove the Ku complex from DNA breaks.

The protein localises to the nucleus. The protein resides in the nucleolus. Its subcellular location is the chromosome. Its function is as follows. Single-stranded DNA-dependent ATP-dependent helicase that plays a key role in DNA non-homologous end joining (NHEJ) by recruiting DNA-PK to DNA. Required for double-strand break repair and V(D)J recombination. Also has a role in chromosome translocation. The DNA helicase II complex binds preferentially to fork-like ends of double-stranded DNA in a cell cycle-dependent manner. It works in the 3'-5' direction. During NHEJ, the XRCC5-XRRC6 dimer performs the recognition step: it recognizes and binds to the broken ends of the DNA and protects them from further resection. Binding to DNA may be mediated by XRCC6. The XRCC5-XRRC6 dimer acts as a regulatory subunit of the DNA-dependent protein kinase complex DNA-PK by increasing the affinity of the catalytic subunit PRKDC to DNA by 100-fold. The XRCC5-XRRC6 dimer is probably involved in stabilizing broken DNA ends and bringing them together. The assembly of the DNA-PK complex to DNA ends is required for the NHEJ ligation step. The XRCC5-XRRC6 dimer probably also acts as a 5'-deoxyribose-5-phosphate lyase (5'-dRP lyase), by catalyzing the beta-elimination of the 5' deoxyribose-5-phosphate at an abasic site near double-strand breaks. XRCC5 probably acts as the catalytic subunit of 5'-dRP activity, and allows to 'clean' the termini of abasic sites, a class of nucleotide damage commonly associated with strand breaks, before such broken ends can be joined. The XRCC5-XRRC6 dimer together with APEX1 acts as a negative regulator of transcription. In association with NAA15, the XRCC5-XRRC6 dimer binds to the osteocalcin promoter and activates osteocalcin expression. As part of the DNA-PK complex, involved in the early steps of ribosome assembly by promoting the processing of precursor rRNA into mature 18S rRNA in the small-subunit processome. Binding to U3 small nucleolar RNA, recruits PRKDC and XRCC5/Ku86 to the small-subunit processome. Plays a role in the regulation of DNA virus-mediated innate immune response by assembling into the HDP-RNP complex, a complex that serves as a platform for IRF3 phosphorylation and subsequent innate immune response activation through the cGAS-STING pathway. The polypeptide is X-ray repair cross-complementing protein 5 (Xrcc5) (Mus musculus (Mouse)).